The following is a 957-amino-acid chain: Leucine--tRNA ligase (957 aa).

The 'HIGH' region motif lies at 70-81 (PYPSGAGLHVGH). The 'KMSKS' region signature appears at 727 to 731 (KMGKS). An ATP-binding site is contributed by Lys730.

It belongs to the class-I aminoacyl-tRNA synthetase family.

The protein resides in the cytoplasm. It catalyses the reaction tRNA(Leu) + L-leucine + ATP = L-leucyl-tRNA(Leu) + AMP + diphosphate. The polypeptide is Leucine--tRNA ligase (Corynebacterium efficiens (strain DSM 44549 / YS-314 / AJ 12310 / JCM 11189 / NBRC 100395)).